The primary structure comprises 178 residues: MENTQENPTDQTTEETGREAQAAENAAPAAEAALAEAQAKIAELQESFLRAKAETENVRRRAQDDVAKAHKFAIESFAENLLPVLDSLEAAVGDTSGDLAKVREGVELTLRQLTSALEKGRVAALNPVGEKFDPHLHQAISMVPADQEPNTVVAVLQKGYTIADRVLRPALVTVAQPK.

Polar residues predominate over residues 1-11 (MENTQENPTDQ). A disordered region spans residues 1–31 (MENTQENPTDQTTEETGREAQAAENAAPAAE). Positions 19 to 31 (EAQAAENAAPAAE) are enriched in low complexity.

Belongs to the GrpE family. In terms of assembly, homodimer.

It localises to the cytoplasm. In terms of biological role, participates actively in the response to hyperosmotic and heat shock by preventing the aggregation of stress-denatured proteins, in association with DnaK and GrpE. It is the nucleotide exchange factor for DnaK and may function as a thermosensor. Unfolded proteins bind initially to DnaJ; upon interaction with the DnaJ-bound protein, DnaK hydrolyzes its bound ATP, resulting in the formation of a stable complex. GrpE releases ADP from DnaK; ATP binding to DnaK triggers the release of the substrate protein, thus completing the reaction cycle. Several rounds of ATP-dependent interactions between DnaJ, DnaK and GrpE are required for fully efficient folding. The protein is Protein GrpE of Burkholderia thailandensis (strain ATCC 700388 / DSM 13276 / CCUG 48851 / CIP 106301 / E264).